The sequence spans 1127 residues: WD repeat and HMG-box DNA-binding protein 1 (1127 aa).

WD repeat units follow at residues 11-50 (GHPEGHTDVCFDDSGNFLVTCGSDGDIRIWESLDDDDPKS), 52-91 (SIGEKAYSFALKNGKVVTAASNNAIQLHTFPDGEPDGILT), 92-131 (RFTTNANHVVFNTDGTRIAAGSGDFLVKVLQVEDSTQQKT), 134-173 (GHSAPVLSVSFDPKDIYLASASCDGSVRIWKISDQTCEAV), 184-223 (FNAKSICRLAWQPKSGKFVAIPVGKAVHLYDRDSLKNICT), 228-267 (FITQPVNIVAWSPCGQYLVAGSVDGCIVAWNIATKACLER), and 271-310 (EKGYTICALAWHPHLPQIAYTDNEGNLGLLEDVCQGDVKQ). Disordered regions lie at residues 811–1013 (AAEQ…AENK) and 1064–1127 (KAKG…FKKE). Residues 819 to 829 (QNEEEDEEEED) are compositionally biased toward acidic residues. The span at 846–857 (GDSRAKPVKQDQ) shows a compositional bias: basic and acidic residues. The segment covering 858–877 (YEENNEEEMEEEEKEQEEAL) has biased composition (acidic residues). Composition is skewed to polar residues over residues 881–891 (TPTANPFNKSV) and 918–937 (SASQKSPAFASNSSRSTSIL). Residues 948–960 (SASGSPSTSKSDS) show a composition bias toward low complexity. The HMG box DNA-binding region spans 1013 to 1076 (KKPKTGFQLW…GDYPGEDGAD (64 aa)). Positions 1087 to 1100 (NMASNGCPQENTDS) are enriched in polar residues.

In terms of assembly, homodimer. As to expression, found in oocytes and in various other cells.

It localises to the nucleus. The protein localises to the nucleoplasm. It is found in the cytoplasm. Its function is as follows. Core replisome component that acts as a replication initiation factor. Binds directly to the CMG complex and functions as a hub to recruit additional proteins to the replication fork. This chain is WD repeat and HMG-box DNA-binding protein 1 (wdhd1), found in Xenopus laevis (African clawed frog).